We begin with the raw amino-acid sequence, 356 residues long: Putative KilA-N domain-containing protein R878 (356 aa).

Residues 1 to 12 show a composition bias toward basic residues; it reads MKVRKSNNKPLK. The interval 1-114 is disordered; sequence MKVRKSNNKP…DDDGSDNNVY (114 aa). Residues 14–46 are compositionally biased toward low complexity; the sequence is SASFTSGTKTGSKSAKSVNSGSKSMKSTKSSSK. Residues 66 to 114 are compositionally biased toward acidic residues; that stretch reads SDNDELSDNEISDNESSDDDEISDNESSDDDEISDNEISDDDGSDNNVY. Residues 130–239 enclose the KilA-N domain; it reads NYSKGKFGNF…VRIGFCMEEW (110 aa).

The chain is Putative KilA-N domain-containing protein R878 from Acanthamoeba polyphaga (Amoeba).